We begin with the raw amino-acid sequence, 367 residues long: MVKYGVVGTGYFGAELARYMQKNDGAEITLLYDPDNAEAIAEELGAKVASSLDELVSSDEVDCVIVATPNNLHKEPVIKAAQHGKNVFCEKPIALSYQDCREMVDACKENNVTFMAGHIMNFFNGVHHAKELINQGVIGDVLYCHTARNGWEEQQPSVSWKKIREKSGGHLYHHIHELDCVQFLMGGMPETVTMTGGNVAHEGEHFGDEDDMIFVNMEFSNKRFALLEWGSAYRWGEHYVLIQGSKGAIRLDLFNCKGTLKLDGQESYFLIHESQEEDDDRTRIYHSTEMDGAIAYGKPGKRTPLWLSSVIDKEMRYLHEIMEGAPVSEEFAKLLTGEAALEAIATADACTQSMFEDRKVKLSEIVK.

It belongs to the Gfo/Idh/MocA family.

This is an uncharacterized protein from Streptococcus pneumoniae serotype 4 (strain ATCC BAA-334 / TIGR4).